The primary structure comprises 494 residues: Cytochrome P450 2A11 (494 aa).

Residue Lys-379 is modified to N6-acetyllysine. Cys-439 is a binding site for heme.

It belongs to the cytochrome P450 family. Requires heme as cofactor. In terms of tissue distribution, expressed in liver and lung as well as in nasal tissues.

It localises to the endoplasmic reticulum membrane. Its subcellular location is the microsome membrane. The enzyme catalyses an organic molecule + reduced [NADPH--hemoprotein reductase] + O2 = an alcohol + oxidized [NADPH--hemoprotein reductase] + H2O + H(+). Catalyzes the oxygenation of a variety of substrates, including ethanol and procarcinogens such as N-nitrosodiethylamine and phenacetin. Has no or little activity as a coumarin 7-hydroxylase and in the formation of androstenedione from testosterone. The protein is Cytochrome P450 2A11 (CYP2A11) of Oryctolagus cuniculus (Rabbit).